Reading from the N-terminus, the 419-residue chain is Coiled-coil domain-containing protein 85C (419 aa).

Alanine 2 is modified (N-acetylalanine). Coiled coils occupy residues 22–88 and 118–159; these read ELLR…RELC and HEVA…AALA. Disordered stretches follow at residues 162-268 and 307-348; these read GAAS…DPSS and HSES…AGQK. Positions 164 to 175 are enriched in gly residues; it reads ASGGGGGGGGAG. The segment covering 176 to 189 has biased composition (low complexity); it reads SRSSIDSQASLSGP. Serine 178 is subject to Phosphoserine. The segment covering 224–233 has biased composition (pro residues); sequence PPPLLPPGPH. The residue at position 246 (serine 246) is a Phosphoserine. Residues 307 to 325 show a composition bias toward polar residues; it reads HSESQLASLPPSYQDSLQN. Residues 329–338 show a composition bias toward pro residues; the sequence is CPAPELPSPP.

Belongs to the CCDC85 family. In terms of assembly, may interact with ARVCF, CTNND1, CTNND2 and PKP4.

It localises to the cell junction. Its subcellular location is the tight junction. The protein localises to the adherens junction. In terms of biological role, may play a role in cell-cell adhesion and epithelium development through its interaction with proteins of the beta-catenin family. May play an important role in cortical development, especially in the maintenance of radial glia. This Homo sapiens (Human) protein is Coiled-coil domain-containing protein 85C (CCDC85C).